A 50-amino-acid chain; its full sequence is uncharacterized protein (50 aa).

This is an uncharacterized protein from Haemophilus influenzae (strain ATCC 51907 / DSM 11121 / KW20 / Rd).